The following is a 213-amino-acid chain: Regulatory protein RecX (213 aa).

Belongs to the RecX family.

It is found in the cytoplasm. Modulates RecA activity. This is Regulatory protein RecX from Clostridium beijerinckii (strain ATCC 51743 / NCIMB 8052) (Clostridium acetobutylicum).